Reading from the N-terminus, the 217-residue chain is Mucosal pentraxin (217 aa).

The N-terminal stretch at 1 to 19 (MEKLLLGVLLLAFLPEGMT) is a signal peptide. Residues 24 to 217 (RGKVFIFPEQ…KGYVVVKPKL (194 aa)) enclose the Pentraxin (PTX) domain. Cysteine 55 and cysteine 114 are joined by a disulfide. 6 residues coordinate Ca(2+): aspartate 77, asparagine 78, glutamate 155, glutamine 156, aspartate 157, and glutamine 167.

This sequence belongs to the pentraxin family. Homopentamer. Pentraxin (or pentaxin) have a discoid arrangement of 5 non-covalently bound subunits. Ca(2+) serves as cofactor.

The protein resides in the secreted. This is Mucosal pentraxin (MPTX) from Bos taurus (Bovine).